A 220-amino-acid chain; its full sequence is 7-cyano-7-deazaguanine synthase (220 aa).

Residue 7-17 (LSGGLDSAVCL) participates in ATP binding. Zn(2+) contacts are provided by cysteine 191, cysteine 199, cysteine 202, and cysteine 205.

It belongs to the QueC family. Homodimer. It depends on Zn(2+) as a cofactor.

It carries out the reaction 7-carboxy-7-deazaguanine + NH4(+) + ATP = 7-cyano-7-deazaguanine + ADP + phosphate + H2O + H(+). It functions in the pathway purine metabolism; 7-cyano-7-deazaguanine biosynthesis. Catalyzes the ATP-dependent conversion of 7-carboxy-7-deazaguanine (CDG) to 7-cyano-7-deazaguanine (preQ(0)). This is 7-cyano-7-deazaguanine synthase from Desulforudis audaxviator (strain MP104C).